The following is a 188-amino-acid chain: MKKLFLIIGAPGSGKTTDASLIAKEDDKYAHFSTGDLLRAEVASGSELGKKIDSFISKGNLVPLEVVVNAIISAIKGSEKSNIIIDGYPRSVEQMTELDKVLSAQNEINLRGVIEVDVSEAIARERVLGRARGADDNNEVFNNRMKVYLDPIEAIRKFYKGKNLLHVVNGERTIEPIVADIKKLIENL.

G12–T17 lines the ATP pocket. Residues S33 to V62 form an NMP region. AMP contacts are provided by residues T34, R39, N60–V62, G87–R90, and Q94. Residues G129–D135 form an LID region. Position 130 (R130) interacts with ATP. AMP is bound by residues R132 and R144. ATP is bound at residue R172.

The protein belongs to the adenylate kinase family. As to quaternary structure, monomer.

The protein localises to the cytoplasm. It carries out the reaction AMP + ATP = 2 ADP. The protein operates within purine metabolism; AMP biosynthesis via salvage pathway; AMP from ADP: step 1/1. Catalyzes the reversible transfer of the terminal phosphate group between ATP and AMP. Plays an important role in cellular energy homeostasis and in adenine nucleotide metabolism. This chain is Adenylate kinase, found in Campylobacter curvus (strain 525.92).